Reading from the N-terminus, the 688-residue chain is Glycine--tRNA ligase beta subunit (688 aa).

Belongs to the class-II aminoacyl-tRNA synthetase family. As to quaternary structure, tetramer of two alpha and two beta subunits.

The protein resides in the cytoplasm. It carries out the reaction tRNA(Gly) + glycine + ATP = glycyl-tRNA(Gly) + AMP + diphosphate. This chain is Glycine--tRNA ligase beta subunit, found in Aliivibrio fischeri (strain ATCC 700601 / ES114) (Vibrio fischeri).